A 105-amino-acid polypeptide reads, in one-letter code: DNA-directed RNA polymerases I and III subunit RPAC2 (105 aa).

It belongs to the archaeal Rpo11/eukaryotic RPB11/RPC19 RNA polymerase subunit family. As to quaternary structure, component of the RNA polymerase I (Pol I) and RNA polymerase III (Pol III) complexes consisting of at least 13 and 17 subunits, respectively.

It localises to the nucleus. In terms of biological role, DNA-dependent RNA polymerase catalyzes the transcription of DNA into RNA using the four ribonucleoside triphosphates as substrates. Common core component of RNA polymerases I and III which synthesize ribosomal RNA precursors and small RNAs, such as 5S rRNA and tRNAs, respectively. This is DNA-directed RNA polymerases I and III subunit RPAC2 from Drosophila melanogaster (Fruit fly).